The primary structure comprises 243 residues: Carboxy-S-adenosyl-L-methionine synthase (243 aa).

Residues Y40, G65–S67, D90–N91, D118–I119, N133, and R200 contribute to the S-adenosyl-L-methionine site.

This sequence belongs to the class I-like SAM-binding methyltransferase superfamily. Cx-SAM synthase family. Homodimer.

It catalyses the reaction prephenate + S-adenosyl-L-methionine = carboxy-S-adenosyl-L-methionine + 3-phenylpyruvate + H2O. In terms of biological role, catalyzes the conversion of S-adenosyl-L-methionine (SAM) to carboxy-S-adenosyl-L-methionine (Cx-SAM). The polypeptide is Carboxy-S-adenosyl-L-methionine synthase (Shewanella putrefaciens (strain CN-32 / ATCC BAA-453)).